Consider the following 89-residue polypeptide: MAHKKAGGSSRNGRDSAGRRLGVKLYGGQAAIPGNIIVRQRGTTWFPGAGVGMGRDHTIFATVEGRVEFRKGLKGRTFISVLPTAEAAE.

It belongs to the bacterial ribosomal protein bL27 family.

This is Large ribosomal subunit protein bL27 from Cereibacter sphaeroides (strain ATCC 17029 / ATH 2.4.9) (Rhodobacter sphaeroides).